Reading from the N-terminus, the 131-residue chain is Sulfurtransferase TusD (131 aa).

The active-site Cysteine persulfide intermediate is C81.

Belongs to the DsrE/TusD family. As to quaternary structure, heterohexamer, formed by a dimer of trimers. The hexameric TusBCD complex contains 2 copies each of TusB, TusC and TusD. The TusBCD complex interacts with TusE.

It is found in the cytoplasm. Part of a sulfur-relay system required for 2-thiolation of 5-methylaminomethyl-2-thiouridine (mnm(5)s(2)U) at tRNA wobble positions. Accepts sulfur from TusA and transfers it in turn to TusE. This chain is Sulfurtransferase TusD, found in Photorhabdus laumondii subsp. laumondii (strain DSM 15139 / CIP 105565 / TT01) (Photorhabdus luminescens subsp. laumondii).